We begin with the raw amino-acid sequence, 460 residues long: MNQINNSTLTFQCETGNYHTFCPISCVAWLYQKIEDSFFLVIGTKTCGYFLQNSMGVMIFAEPRYAMAELEEGDISAQINDYEELKRLCTQIKNDRNPSVIVFIGTCTTEIIKMDLEGIAPKLEAEIGIPIVVARANGLDYTFTQGEDTVLASLIQRCPSKDRETEKINKNNSSLFPSLSIFSKNKNESNLSQDKPNLPLVLFGSLPNSLTNQLEHELEKQNIKISGWLPTKNYKELPVIHEGDYVCGVNPYLARTATNLIRRRKCKLISAPFPIGPDGTRAWIEKICSIFNIEPTGLDEREKAVWDSLENYLPLVKGKSVFFMGDNLLELSIARFLIRCGMIVPEIGIPYLHKRYQEAEIKLLEDTCRKMQVPTPLIIEKPDNYEELKRIEQYRPDLVITGMANANPLEARGINTKWSVEFTFAQIHGFSNARDILELVTRSLRRKNYIQQLGWKELVE.

[4Fe-4S] cluster-binding residues include Cys22, Cys47, and Cys107.

Belongs to the BchN/ChlN family. As to quaternary structure, protochlorophyllide reductase is composed of three subunits; ChlL, ChlN and ChlB. Forms a heterotetramer of two ChlB and two ChlN subunits. Requires [4Fe-4S] cluster as cofactor.

The protein resides in the plastid. The protein localises to the cyanelle. It catalyses the reaction chlorophyllide a + oxidized 2[4Fe-4S]-[ferredoxin] + 2 ADP + 2 phosphate = protochlorophyllide a + reduced 2[4Fe-4S]-[ferredoxin] + 2 ATP + 2 H2O. Its pathway is porphyrin-containing compound metabolism; chlorophyll biosynthesis (light-independent). In terms of biological role, component of the dark-operative protochlorophyllide reductase (DPOR) that uses Mg-ATP and reduced ferredoxin to reduce ring D of protochlorophyllide (Pchlide) to form chlorophyllide a (Chlide). This reaction is light-independent. The NB-protein (ChlN-ChlB) is the catalytic component of the complex. The polypeptide is Light-independent protochlorophyllide reductase subunit N (Cyanophora paradoxa).